Consider the following 102-residue polypeptide: NADH-quinone oxidoreductase subunit K (102 aa).

3 consecutive transmembrane segments (helical) span residues 5–25 (LAHYLILGAILFAIGIFGIFL), 31–51 (IILLMSIELVLLAVNMNFVAF), and 62–82 (VFVFFILTVAAAEAAIGLAIL).

Belongs to the complex I subunit 4L family. As to quaternary structure, NDH-1 is composed of 14 different subunits. Subunits NuoA, H, J, K, L, M, N constitute the membrane sector of the complex.

It is found in the cell inner membrane. The enzyme catalyses a quinone + NADH + 5 H(+)(in) = a quinol + NAD(+) + 4 H(+)(out). NDH-1 shuttles electrons from NADH, via FMN and iron-sulfur (Fe-S) centers, to quinones in the respiratory chain. The immediate electron acceptor for the enzyme in this species is believed to be ubiquinone. Couples the redox reaction to proton translocation (for every two electrons transferred, four hydrogen ions are translocated across the cytoplasmic membrane), and thus conserves the redox energy in a proton gradient. In Bordetella parapertussis (strain 12822 / ATCC BAA-587 / NCTC 13253), this protein is NADH-quinone oxidoreductase subunit K.